Reading from the N-terminus, the 331-residue chain is Probable transaldolase (331 aa).

Residue lysine 142 is the Schiff-base intermediate with substrate of the active site.

The protein belongs to the transaldolase family. Type 1 subfamily. As to quaternary structure, homodimer.

Its subcellular location is the cytoplasm. The enzyme catalyses D-sedoheptulose 7-phosphate + D-glyceraldehyde 3-phosphate = D-erythrose 4-phosphate + beta-D-fructose 6-phosphate. Its pathway is carbohydrate degradation; pentose phosphate pathway; D-glyceraldehyde 3-phosphate and beta-D-fructose 6-phosphate from D-ribose 5-phosphate and D-xylulose 5-phosphate (non-oxidative stage): step 2/3. Transaldolase is important for the balance of metabolites in the pentose-phosphate pathway. The chain is Probable transaldolase from Drosophila melanogaster (Fruit fly).